The primary structure comprises 404 residues: MHKDPSIIVNINLREAKLKKKVREHLQSLGFTRSDSGALQAPGNTKDVIRALHSSQRAERIFANQKFITLRAAKLIKFFASGNEVIPDKISPVLERVKSGTWQGDLFRLAALTWSVPVSSGFGRRLRYLVWDESNGKLIGLIAIGDPVFNLAVRDNLIGWDTHARSSRLVNLMDAYVLGALPPYNALLGGKLIACLLRSRDLYDDFAKVYGDTVGVISQKKKQARLLAITTTSSMGRSSVYNRLKLDGIQYLKSIGYTGGWGHFHIPDSLFIELRDYLRDMDHAYADHYMFGNGPNWRLRTTKAALNVLGFRDNLMKHGIQREVFISQLAENATSILQTGKGEPDLTSLLSAKEIAECAMARWMVPRSIRNPEYRLWKARDLFDFISNDSLKFPPSDEIAKTVV.

The protein resides in the cytoplasm. Component of antiviral defense system Druantia type I, composed of DruA, DruB, DruC, DruD and DruE. Expression of Druantia in E.coli (strain MG1655) confers resistance to phage lambda, SECphi18, SECphi27 and T4. The polypeptide is Druantia protein DruA (Escherichia coli (strain UMEA 4076-1)).